Reading from the N-terminus, the 234-residue chain is Phosphatidylcholine synthase (234 aa).

Over 1–3 (MKN) the chain is Cytoplasmic. Residues 4 to 24 (INLILAWLVHIFTASGLIVGL) form a helical membrane-spanning segment. Residues 25–26 (YS) are Periplasmic-facing. Residues 27 to 47 (IISIVNGNYSLLLKLTVIGLI) form a helical membrane-spanning segment. Over 48–75 (IDGIDGTMARKLKVKELIPEIDGTLLDN) the chain is Cytoplasmic. A helical membrane pass occupies residues 76-96 (ITDYINYTFIPVIFFYLGEFI). At 97-98 (EE) the chain is on the periplasmic side. A helical membrane pass occupies residues 99-116 (KYKVAICIGILLSSAYQF). Residues 117 to 126 (SRTDAKTNDN) are Cytoplasmic-facing. The helical transmembrane segment at 127–147 (YFRGFPSLWNLFVILNIIFKM) threads the bilayer. The Periplasmic segment spans residues 148–149 (EQ). A helical transmembrane segment spans residues 150 to 170 (ITNLITMSICIITSFIPIKFI). Topologically, residues 171–180 (YPSKTKELRK) are cytoplasmic. Residues 181–201 (ITIPITIISCLIFVVSIFSEL) traverse the membrane as a helical segment. At 202–207 (STTALK) the chain is on the periplasmic side. A helical transmembrane segment spans residues 208–228 (MAKTVLILYFAYLTLASIYLT). Topologically, residues 229-234 (YKTRNR) are cytoplasmic.

Belongs to the CDP-alcohol phosphatidyltransferase class-I family. Mn(2+) is required as a cofactor.

It is found in the cell inner membrane. It catalyses the reaction a CDP-1,2-diacyl-sn-glycerol + choline = a 1,2-diacyl-sn-glycero-3-phosphocholine + CMP + H(+). Condenses choline with CDP-diglyceride to produce phosphatidylcholine and CMP. This is Phosphatidylcholine synthase from Borreliella burgdorferi (strain ATCC 35210 / DSM 4680 / CIP 102532 / B31) (Borrelia burgdorferi).